The chain runs to 516 residues: Apolipoprotein N-acyltransferase (516 aa).

The next 6 membrane-spanning stretches (helical) occupy residues 24–44 (LAQA…LLYL), 58–78 (GWCY…ISIH), 90–110 (LLTL…AWLW), 125–145 (LAFA…LTGF), 163–183 (APLG…ALLV), and 192–212 (PPAL…GLAL). Residues 230 to 471 (VQGNVEQNLK…RAVLYGEVTP (242 aa)) form the CN hydrolase domain. E270 functions as the Proton acceptor in the catalytic mechanism. The active site involves K331. The active-site Nucleophile is the C383. Residues 479–499 (LRWRAWPLAGLAVLLLGWALL) traverse the membrane as a helical segment.

This sequence belongs to the CN hydrolase family. Apolipoprotein N-acyltransferase subfamily.

It localises to the cell inner membrane. It catalyses the reaction N-terminal S-1,2-diacyl-sn-glyceryl-L-cysteinyl-[lipoprotein] + a glycerophospholipid = N-acyl-S-1,2-diacyl-sn-glyceryl-L-cysteinyl-[lipoprotein] + a 2-acyl-sn-glycero-3-phospholipid + H(+). It participates in protein modification; lipoprotein biosynthesis (N-acyl transfer). Its function is as follows. Catalyzes the phospholipid dependent N-acylation of the N-terminal cysteine of apolipoprotein, the last step in lipoprotein maturation. The chain is Apolipoprotein N-acyltransferase from Azotobacter vinelandii (strain DJ / ATCC BAA-1303).